Reading from the N-terminus, the 906-residue chain is MDEHFQPCLDGIDYDDFSFGSHMVEQKEPLMETAVGPYLVIIEQPKQRGFRFRYVCEGPSHGGLPGASSEKGHKTYPTVKICNYEGMARIEVDLVTHSDPPRVHAHSLVGKQCNEAGNCVAIVGPKDMTAQFSNLGVLHVTKKNMMEIMKEKLKKQKTRNTNGLLTEAELREIELEAKELKKVMDLSIVRLRFTAYLRDSSGNFTLALQPVISDPIHDSKSPGASNLKISRMDKTAGSVRGGDEVYLLCDKVQKDDIEVRFYEDDENGWQASGDFSPTDVHKQYAIVFRTPPYHKPKIDRPVTVFLQLKRKRGGDVSDSKQFTYYPVVEDKEEVERNRKKVLPQFPQHFGGGSHMGGAGGAGGFGAGGGGNLSFPYSSGLGYNNLYSSSPHPVGCGYQGGVQMKAASERDGDDRQAPTESTYCRELQRHRHLCHLWLLARRNAHALLDYSVTADPRMLLAVQRHLAASQDENGDTPLHLAIIHEQTAVIKQLIEVVVSIPSQQIINITNNLQQTPLHLAVITKQPQVVQLLLEAHANPTLLDRYGNSLLHLALQAADEEMLRMLLAHLASATPYLLHLPNFQGLLPVHLAVKAKSPACLDLLVRKGADVNGVERQGGRTPLHLAVEMENLNMATHLVKKLGANVNSRTFAGNTPLHLAAGLGSPTLTKLLLKAGADVQRENDEPVSPSSVRVPSSDTDGDPEEQEQEQAMELGEPALSPHPTPEEEQEEAGPRQRLHTALDLTRSQKVRDILLQASQPSPPILSCPPPPSRNHLLSLDTDALQGLEQLLNQYGSGSDWMELAKRLGLCSLVETYKTTPSPASALRSYELPGGSLGGLLEALDSMGLRGAVRMLRKPEPLEKLQSTEVKEDSAYGSESVEEEQAARLKPRPVPEGELPHSQQQQQVH.

Residues 34–223 (AVGPYLVIIE…DPIHDSKSPG (190 aa)) enclose the RHD domain. A Nuclear localization signal motif is present at residues 336–340 (RNRKK). The interval 345–374 (FPQHFGGGSHMGGAGGAGGFGAGGGGNLSF) is GRR. ANK repeat units follow at residues 472–501 (NGDT…SIPS), 511–540 (LQQT…NPTL), 544–573 (YGNS…SATP), 582–611 (QGLL…DVNG), 616–646 (GGRT…NVNS), and 650–679 (AGNT…DVQR). 2 disordered regions span residues 677–734 (VQRE…GPRQ) and 857–906 (EPLE…QQVH). Low complexity predominate over residues 684–695 (PVSPSSVRVPSS). A compositionally biased stretch (acidic residues) spans 697 to 708 (TDGDPEEQEQEQ). Residues 771 to 857 (RNHLLSLDTD…GAVRMLRKPE (87 aa)) form the Death domain.

As to quaternary structure, component of the NF-kappa-B RelB-p52 complex. In terms of processing, while translation occurs, the particular unfolded structure after the GRR repeat promotes the generation of p52 making it an acceptable substrate for the proteasome. This process is known as cotranslational processing. The processed form is active and the unprocessed form acts as an inhibitor (I kappa B-like), being able to form cytosolic complexes with NF-kappa B, trapping it in the cytoplasm. Complete folding of the region downstream of the GRR repeat precludes processing. Constitutive processing is tightly suppressed by its C-terminal processing inhibitory domain, named PID, which contains the death domain.

It localises to the nucleus. It is found in the cytoplasm. NF-kappa-B is a pleiotropic transcription factor present in almost all cell types and is the endpoint of a series of signal transduction events that are initiated by a vast array of stimuli related to many biological processes such as inflammation, immunity, differentiation, cell growth, tumorigenesis and apoptosis. NF-kappa-B is a homo- or heterodimeric complex formed by the Rel-like domain-containing proteins RELA/p65, RELB, NFKB1/p105, NFKB1/p50, REL and NFKB2/p52. The dimers bind at kappa-B sites in the DNA of their target genes and the individual dimers have distinct preferences for different kappa-B sites that they can bind with distinguishable affinity and specificity. Different dimer combinations act as transcriptional activators or repressors, respectively. NF-kappa-B is controlled by various mechanisms of post-translational modification and subcellular compartmentalization as well as by interactions with other cofactors or corepressors. NF-kappa-B complexes are held in the cytoplasm in an inactive state complexed with members of the NF-kappa-B inhibitor (I-kappa-B) family. In a conventional activation pathway, I-kappa-B is phosphorylated by I-kappa-B kinases (IKKs) in response to different activators, subsequently degraded thus liberating the active NF-kappa-B complex which translocates to the nucleus. In a non-canonical activation pathway, the MAP3K14-activated CHUK/IKKA homodimer phosphorylates NFKB2/p100 associated with RelB, inducing its proteolytic processing to NFKB2/p52 and the formation of NF-kappa-B RelB-p52 complexes. The NF-kappa-B heterodimeric RelB-p52 complex is a transcriptional activator. NFKB2 appears to have dual functions such as cytoplasmic retention of attached NF-kappa-B proteins by p100 and generation of p52 by a cotranslational processing. The proteasome-mediated process ensures the production of both p52 and p100 and preserves their independent function. p52 binds to the kappa-B consensus sequence 5'-GGRNNYYCC-3', located in the enhancer region of genes involved in immune response and acute phase reactions. In concert with RELB, may play a role in the regulation of the circadian clock. In Gallus gallus (Chicken), this protein is Nuclear factor NF-kappa-B p100 subunit (NFKB2).